A 214-amino-acid polypeptide reads, in one-letter code: Probable nicotinate-nucleotide adenylyltransferase (214 aa).

Belongs to the NadD family.

It carries out the reaction nicotinate beta-D-ribonucleotide + ATP + H(+) = deamido-NAD(+) + diphosphate. The protein operates within cofactor biosynthesis; NAD(+) biosynthesis; deamido-NAD(+) from nicotinate D-ribonucleotide: step 1/1. Catalyzes the reversible adenylation of nicotinate mononucleotide (NaMN) to nicotinic acid adenine dinucleotide (NaAD). The polypeptide is Probable nicotinate-nucleotide adenylyltransferase (Mycolicibacterium vanbaalenii (strain DSM 7251 / JCM 13017 / BCRC 16820 / KCTC 9966 / NRRL B-24157 / PYR-1) (Mycobacterium vanbaalenii)).